We begin with the raw amino-acid sequence, 144 residues long: MPKNKGKGGKNRRRGKNENESEKRELVFKEDGQEYAQVIKMLGNGRLEAMCFDGVKRLCHIRGKLRKKVWINTSDIILVGLRDYQDNKADVILKYNADEARSLKAYGELPEHAKINETDTFGPGDDDEIQFDDIGDDDEDIDDI.

Residues 1 to 15 (MPKNKGKGGKNRRRG) are compositionally biased toward basic residues. Disordered regions lie at residues 1-26 (MPKN…KREL) and 114-144 (KINE…IDDI). A compositionally biased stretch (basic and acidic residues) spans 16 to 26 (KNENESEKREL). The S1-like domain maps to 22–96 (EKRELVFKED…NKADVILKYN (75 aa)). The segment covering 124–144 (GDDDEIQFDDIGDDDEDIDDI) has biased composition (acidic residues).

It belongs to the eIF-1A family. In terms of assembly, component of the 43S pre-initiation complex (43S PIC), which is composed of the 40S ribosomal subunit, EIF1, eIF1A (EIF1AX), eIF3 complex, EIF5 and eIF2-GTP-initiator tRNA complex (eIF2 ternary complex). Interacts with EIF5; this interaction contributes to the maintenance of EIF1 within the open 43S PIC. Interacts through its C-terminal domain (CTD) with the CTD of EIF5B; from the location of the start codon by the 43S complex until the formation of the 80S complex. As to quaternary structure, (Microbial infection) Interacts with human respiratory syncytial virus (HRSV) nucleoprotein; this interaction recruits EIF1AX to the viral replication complex to facilitate viral genomic RNA synthesis and virus production.

The protein resides in the cytoplasm. Component of the 43S pre-initiation complex (43S PIC), which binds to the mRNA cap-proximal region, scans mRNA 5'-untranslated region, and locates the initiation codon. This protein enhances formation of the cap-proximal complex. Together with EIF1, facilitates scanning, start codon recognition, promotion of the assembly of 48S complex at the initiation codon (43S PIC becomes 48S PIC after the start codon is reached), and dissociation of aberrant complexes. After start codon location, together with EIF5B orients the initiator methionine-tRNA in a conformation that allows 60S ribosomal subunit joining to form the 80S initiation complex. Is released after 80S initiation complex formation, just after GTP hydrolysis by EIF5B, and before release of EIF5B. Its globular part is located in the A site of the 40S ribosomal subunit. Its interaction with EIF5 during scanning contribute to the maintenance of EIF1 within the open 43S PIC. In contrast to yeast orthologs, does not bind EIF1. This chain is Eukaryotic translation initiation factor 1A, X-chromosomal (EIF1AX), found in Homo sapiens (Human).